The sequence spans 805 residues: Phosphoinositide 3-kinase adapter protein 1 (805 aa).

Residues 8-145 (RGCDILIVYS…AVKKAISEDS (138 aa)) form the TIR domain. A necessary and sufficient to mediate inhibition of NF-kappa-B downstream of activated TLRs; may mediate interaction with MYD88 and TIRAP region spans residues 10 to 144 (CDILIVYSPD…AAVKKAISED (135 aa)). The tract at residues 145–165 (SGCDSVTDTEPEDEKVVSYSK) is disordered. The region spanning 181-317 (VQPDRIRCGA…NIPASGLHLF (137 aa)) is the DBB domain. Tyr263 is modified (phosphotyrosine). 3 positions are modified to phosphotyrosine; by SYK: Tyr419, Tyr444, and Tyr459. Tyr513 is subject to Phosphotyrosine; by ABL1. The interval 527–547 (ASRPPVPVPRPETTAPGAHQL) is disordered. A phosphotyrosine; by ABL1 mark is found at Tyr553 and Tyr570. Positions 571–590 (VSSESIRKGPPVRPWRDRPQ) are disordered. Residue Tyr594 is modified to Phosphotyrosine; by ABL1. At Ser642 the chain carries Phosphoserine. Residues 645 to 667 (FQQENLKRLRDSITRRQREKQKS) are a coiled coil. The span at 654–672 (RDSITRRQREKQKSGKQTD) shows a compositional bias: basic and acidic residues. Positions 654-679 (RDSITRRQREKQKSGKQTDLEITVPI) are disordered. A Phosphotyrosine; by ABL1 modification is found at Tyr694. The segment at 697 to 805 (GPRKSVIPPR…PPPPVPPRGR (109 aa)) is disordered. A compositionally biased stretch (basic and acidic residues) spans 707-716 (TELRRGDWKT). A compositionally biased stretch (low complexity) spans 717–740 (DSTSSTASSTSNRSSTRSLLSVSS). Phosphoserine is present on Ser718. The span at 795–805 (HPPPPVPPRGR) shows a compositional bias: pro residues.

Homooligomer. Interacts (phosphorylated on tyrosine residues within YXXM motifs) with PIK3R1 (via SH2 domain); required for BCR- and TLR-mediated activation of phosphoinositide 3-kinase. Interacts (via polyproline C-terminal region) with ABI1 (via SH3 domain); the interaction promotes phosphorylation of PIK3AP1 by ABL1. May interact with MYD88 and TIRAP. In terms of processing, constitutively phosphorylated. Phosphorylated on tyrosine residues in C-terminal region by ABL1. Phosphorylated on tyrosine residues within the YXXM motifs by BTK and SYK. Isoform 1 and isoform 2 are phosphorylated on tyrosine residues, most likely within the YXXM motifs, via CD19 activation. Toll-like receptor activation induces appearance of a phosphorylated form associated with membranes. As to expression, expressed in natural killer (NK) cells.

It localises to the cytoplasm. The protein resides in the cell membrane. In terms of biological role, signaling adapter that contributes to B-cell development by linking B-cell receptor (BCR) signaling to the phosphoinositide 3-kinase (PI3K)-Akt signaling pathway. Has a complementary role to the BCR coreceptor CD19, coupling BCR and PI3K activation by providing a docking site for the PI3K subunit PIK3R1. Alternatively, links Toll-like receptor (TLR) signaling to PI3K activation, a process preventing excessive inflammatory cytokine production. Also involved in the activation of PI3K in natural killer cells. May be involved in the survival of mature B-cells via activation of REL. The chain is Phosphoinositide 3-kinase adapter protein 1 (PIK3AP1) from Homo sapiens (Human).